The sequence spans 1663 residues: Complement C3 (1663 aa).

A signal peptide spans 1 to 24 (MGPASGSQLLVLLLLLASSPLALG). Phosphoserine is present on Ser-40. 13 cysteine pairs are disulfide-bonded: Cys-559–Cys-816, Cys-626–Cys-661, Cys-693–Cys-720, Cys-694–Cys-727, Cys-707–Cys-728, Cys-873–Cys-1513, Cys-1101–Cys-1158, Cys-1358–Cys-1489, Cys-1389–Cys-1458, Cys-1506–Cys-1511, Cys-1518–Cys-1590, Cys-1537–Cys-1661, and Cys-1637–Cys-1646. A Phosphoserine modification is found at Ser-671. The region spanning 693–728 (CCEDGMRDIPMRYSCQRRARLITQGENCIKAFIDCC) is the Anaphylatoxin-like domain. N-linked (GlcNAc...) asparagine glycosylation is present at Asn-939. A Phosphoserine modification is found at Ser-968. Positions 1010–1013 (CGEQ) form a cross-link, isoglutamyl cysteine thioester (Cys-Gln). Position 1321 is a phosphoserine (Ser-1321). An NTR domain is found at 1518-1661 (CFMQQSQEKI…FTESMVVYGC (144 aa)). Ser-1573 is subject to Phosphoserine. N-linked (GlcNAc...) asparagine glycosylation is present at Asn-1617. The interaction with CFP/properdin stretch occupies residues 1634–1659 (AEECQDQKYQKQCEELGAFTESMVVY).

As to quaternary structure, in absence of complement activation, the C3 precursor is first processed by the removal of 4 Arg residues, forming two chains, beta and alpha, linked by a disulfide bond. In terms of assembly, complement C3b is composed of complement C3b and complement C3 beta chains that are associated via disulfide bonds. Non-enzymatic component of the C5 convertase, also named C4bC2bC3b, composed of the serine protease complement C2b (C2), complement C3b, as well as complement C4b (C4). Non-enzymatic component of the C5 convertase of the alternative complement pathways composed of the serine protease complement CFB and complement C3b. Interacts with CFP; interaction takes place together with CFB in the alternative complement system and allows the complex to become active. Interacts with CR1 (via Sushi 8 and Sushi 9 domains). Interacts with CFH. Interacts with CFH. Interacts with CR2. As to quaternary structure, during pregnancy, C3dg exists as a complex (probably a 2:2:2 heterohexamer) with AGT and the proform of PRG2. Interacts with CR2 (via the N-terminal Sushi domains 1 and 2). In terms of processing, C3 precursor is first processed by the removal of 4 Arg residues, forming two chains, beta and alpha, linked by a disulfide bond. During activation of the complement systems, the alpha chain is cleaved into C3a and C3b by the C3 convertase: C3b stays linked to the beta chain, while C3a is released in the plasma. The alpha chain is cleaved by the serine protease complement C2b component of the C3 convertase to generate C3a and C3b following activation by the classical, lectin and GZMK complement systems. The alpha chain is cleaved by CFB component of the C3 convertase to generate C3a and C3b following activation by the alternative complement system. C3a is further processed by carboxypeptidases to release the C-terminal arginine residue generating the acylation stimulating protein (ASP). Levels of ASP are increased in adipocytes in the postprandial period and by insulin and dietary chylomicrons. Post-translationally, complement C3b is rapidly split in two positions by factor I (CFI) and a cofactor (CFH) to form iC3b (inactivated C3b) and C3f which is released. CFI and CFH catalyze proteolytic degradation of already-deposited complement C3b. Then iC3b is slowly cleaved (possibly by CFI) to form C3c (beta chain + alpha' chain fragment 1 + alpha' chain fragment 2), C3dg and C3f. Other proteases produce other fragments such as C3d or C3g. In terms of processing, upon activation, the internal thioester bond reacts with carbohydrate antigens on the target surface to form amide or ester bonds, leading to covalent association with the surface of pathogens. Complement C3b interacts with complement C4b via a thioester linkage. Post-translationally, phosphorylated by FAM20C in the extracellular medium.

The protein resides in the secreted. Its subcellular location is the cell surface. Complement activation is inhibited by VSIG4. Precursor of non-enzymatic components of the classical, alternative, lectin and GZMK complement pathways, which consist in a cascade of proteins that leads to phagocytosis and breakdown of pathogens and signaling that strengthens the adaptive immune system. In terms of biological role, non-enzymatic component of C5 convertase. Generated following cleavage by C3 convertase, it covalently attaches to the surface of pathogens, where it acts as an opsonin that marks the surface of antigens for removal. Complement C3b binds covalently via its reactive thioester, to cell surface carbohydrates or immune aggregates. Together with complement C4b, it then recruits the serine protease complement C2b to form the C5 convertase, which cleaves and activate C5, the next component of the complement pathways. In the alternative complement pathway, recruits the serine protease CFB to form the C5 convertase that cleaves and activates C5. Its function is as follows. Mediator of local inflammatory process released following cleavage by C3 convertase. Acts by binding to its receptor, C3AR1, activating G protein-coupled receptor signaling, promoting the phosphorylation, ARRB2-mediated internalization and endocytosis of C3AR1. C3a anaphylatoxin stimulates the activation of immune cells such as mast cells and basophilic leukocytes to release inflammation agents, such as cytokines, chemokines and histamine, which promote inflammation development. Also acts as potent chemoattractant for the migration of macrophages and neutrophils to the inflamed tissues, resulting in neutralization of the inflammatory triggers by multiple ways, such as phagocytosis and generation of reactive oxidants. Functionally, adipogenic hormone that stimulates triglyceride synthesis and glucose transport in adipocytes, regulating fat storage and playing a role in postprandial triglyceride clearance. Appears to stimulate triglyceride synthesis via activation of the PLC, MAPK and AKT signaling pathways. Acts by binding to its receptor, C5AR2, activating G protein-coupled receptor signaling, promoting the phosphorylation, ARRB2-mediated internalization and endocytosis of C5AR2. Acts as a chemoattractant for neutrophils in chronic inflammation. The chain is Complement C3 from Mus musculus (Mouse).